The primary structure comprises 3332 residues: Nonribosomal peptide synthetase imqB (3332 aa).

The tract at residues 230–622 (FSEQVKAHPG…IGRKDTQVKV (393 aa)) is adenylation 1. The Carrier 1 domain occupies 764–846 (GRITPQEKLL…DMARCITRVD (83 aa)). Ser801 is modified (O-(pantetheine 4'-phosphoryl)serine). The segment at 886–1314 (DIYPCTPLQE…NCLTRKELHQ (429 aa)) is condensation 1. The segment at 1336 to 1740 (EVSNTRPTAP…GRKDRQLKVR (405 aa)) is adenylation 2. The region spanning 1880–1954 (AIATPKEEKL…EMAEKAAETG (75 aa)) is the Carrier 2 domain. Ser1915 is subject to O-(pantetheine 4'-phosphoryl)serine. Residues 1992 to 2402 (EDIYPCTPLQ…CLSEIDTQQI (411 aa)) form a condensation 2 region. Residues 2422-2819 (AQQAREHPAT…GRKDTQVKIR (398 aa)) are adenylation 3. The Carrier 3 domain maps to 2963–3039 (EVATNDEAAV…DLASRIGRVE (77 aa)). An O-(pantetheine 4'-phosphoryl)serine modification is found at Ser3000. The thioesterase (TE) domain stretch occupies residues 3058 to 3323 (SSNPTLIQGQ…ETTRHIRDFC (266 aa)).

This sequence belongs to the NRP synthetase family.

It participates in secondary metabolite biosynthesis. In terms of biological role, nonribosomal peptide synthetase; part of the gene cluster that mediates the biosynthesis of imizoquins A to D, tripeptide-derived alkaloids that serve a protective role against oxidative stress that are essential for normal germination. ImqB is a canonical three-module NRPS that assembles the tripeptide backbone of the imizoquins via condensation of Trp, Tyr, and Leu-derived precursors. N-methylation by imqF and phenol oxidation by imqC, followed by cyclization via the FAD-dependent oxidase imqH carry out the three-step transformation of L-tyrosine into tetrahydroisoquinoline. Importantly, this sequence requires the presence of a free amine in the tyrosine moiety, indicating that isoquinoline formation occurs prior to peptide bond formation. The imidazolidin-4-one ring of imizoquins could form following additional oxidation of the methyl-derived bridgehead carbon by imqH. Lastly, O-methylation by imqG and leucine hydroxylation by imqE complete biosynthesis of the imizoquins. This Aspergillus flavus (strain ATCC 200026 / FGSC A1120 / IAM 13836 / NRRL 3357 / JCM 12722 / SRRC 167) protein is Nonribosomal peptide synthetase imqB.